Here is a 510-residue protein sequence, read N- to C-terminus: Dermokine (510 aa).

An N-terminal signal peptide occupies residues methionine 1–alanine 21. Residues valine 117–glycine 362 are disordered. A compositionally biased stretch (polar residues) spans tryptophan 124–asparagine 137. Positions proline 141 to glycine 158 are enriched in gly residues. Polar residues predominate over residues glycine 194–proline 221. Composition is skewed to gly residues over residues glycine 222–glycine 231, threonine 240–asparagine 254, and serine 264–asparagine 292. Composition is skewed to low complexity over residues alanine 293–serine 303 and proline 319–arginine 332. The segment covering glycine 344–glycine 355 has biased composition (gly residues).

Belongs to the dermokine family. In terms of assembly, homooligomer. Seems to be able to homodimerize and homotrimerize. Post-translationally, O-glycosylated.

The protein localises to the secreted. In terms of biological role, may act as a soluble regulator of keratinocyte differentiation. The sequence is that of Dermokine (DMKN) from Bos taurus (Bovine).